We begin with the raw amino-acid sequence, 366 residues long: tRNA/tmRNA (uracil-C(5))-methyltransferase (366 aa).

S-adenosyl-L-methionine is bound by residues Gln-188, Tyr-216, Asn-221, Glu-237, and Asp-297. The active-site Nucleophile is Cys-322. The active-site Proton acceptor is the Glu-356.

It belongs to the class I-like SAM-binding methyltransferase superfamily. RNA M5U methyltransferase family. TrmA subfamily.

The enzyme catalyses uridine(54) in tRNA + S-adenosyl-L-methionine = 5-methyluridine(54) in tRNA + S-adenosyl-L-homocysteine + H(+). It catalyses the reaction uridine(341) in tmRNA + S-adenosyl-L-methionine = 5-methyluridine(341) in tmRNA + S-adenosyl-L-homocysteine + H(+). Functionally, dual-specificity methyltransferase that catalyzes the formation of 5-methyluridine at position 54 (m5U54) in all tRNAs, and that of position 341 (m5U341) in tmRNA (transfer-mRNA). In Histophilus somni (strain 129Pt) (Haemophilus somnus), this protein is tRNA/tmRNA (uracil-C(5))-methyltransferase.